A 33-amino-acid chain; its full sequence is Photosystem II reaction center protein Psb30 (33 aa).

Residues 5–25 (VVVQLGSLSLIVLAGPIIVLL) form a helical membrane-spanning segment.

It belongs to the Psb30/Ycf12 family. In terms of assembly, PSII is composed of 1 copy each of membrane proteins PsbA, PsbB, PsbC, PsbD, PsbE, PsbF, PsbH, PsbI, PsbJ, PsbK, PsbL, PsbM, PsbT, PsbX, PsbY, PsbZ, Psb30/Ycf12, peripheral proteins of the oxygen-evolving complex and a large number of cofactors. It forms dimeric complexes.

It is found in the plastid. The protein localises to the chloroplast thylakoid membrane. Functionally, a core subunit of photosystem II (PSII), probably helps stabilize the reaction center. The protein is Photosystem II reaction center protein Psb30 of Mesostigma viride (Green alga).